Consider the following 886-residue polypeptide: Linoleate 9S-lipoxygenase 5 (886 aa).

Positions 35–180 (IEGEVVVMKK…RYRSDRVFFS (146 aa)) constitute a PLAT domain. Positions 183 to 886 (AYLPSETPEL…GKGIPNSVSI (704 aa)) constitute a Lipoxygenase domain. The tract at residues 234–266 (GPDSVRPVLGGSPELPYPRRGKTGRKSTKSDPK) is disordered. Fe cation is bound by residues His542, His547, His733, Asn737, and Ile886.

The protein belongs to the lipoxygenase family. Requires Fe cation as cofactor. Expressed in roots.

It catalyses the reaction (9Z,12Z)-octadecadienoate + O2 = (9S)-hydroperoxy-(10E,12Z)-octadecadienoate. It carries out the reaction (9Z,12Z,15Z)-octadecatrienoate + O2 = (9S)-hydroperoxy-(10E,12Z,15Z)-octadecatrienoate. It functions in the pathway lipid metabolism; oxylipin biosynthesis. 9S-lipoxygenase that can use linoleic acid or linolenic acid as substrates. Plant lipoxygenases may be involved in a number of diverse aspects of plant physiology including growth and development, pest resistance, and senescence or responses to wounding. Catalyzes the hydroperoxidation of lipids containing a cis,cis-1,4-pentadiene structure. Function as regulators of root development by controlling the emergence of lateral roots. 9S-lypoxygenase-derived oxylipins may play an antagonistic role to ethylene signaling in the control of responses involving oxidative stress, lipid peroxidation and plant defense. LOX5-derived oxylipins may facilitate performance of green peach aphid (Myzus persicae) on foliage. 9S-lypoxygenase-derived oxylipins are engaged during infection to control the balance between salicylic acid (SA) and jasmonate (JA) signaling to facilitate infection by the fungal pathogen Fusarium graminearum. 9S-lypoxygenase-derived oxylipins activate brassinosteroid signaling to promote cell wall-based defense and limit pathogen infection. Does not seem to contribute to the oxidation of free fatty acids during seed aging. This is Linoleate 9S-lipoxygenase 5 from Arabidopsis thaliana (Mouse-ear cress).